Reading from the N-terminus, the 429-residue chain is Histidine--tRNA ligase (429 aa).

It belongs to the class-II aminoacyl-tRNA synthetase family. Homodimer.

The protein localises to the cytoplasm. The catalysed reaction is tRNA(His) + L-histidine + ATP = L-histidyl-tRNA(His) + AMP + diphosphate + H(+). The sequence is that of Histidine--tRNA ligase from Prochlorococcus marinus (strain MIT 9515).